The chain runs to 216 residues: Protein Syd (216 aa).

It belongs to the Syd family.

It is found in the cell inner membrane. In terms of biological role, interacts with the SecY protein in vivo. May bind preferentially to an uncomplexed state of SecY, thus functioning either as a chelating agent for excess SecY in the cell or as a regulatory factor that negatively controls the translocase function. The chain is Protein Syd from Shewanella sp. (strain ANA-3).